The primary structure comprises 227 residues: 2,3-bisphosphoglycerate-dependent phosphoglycerate mutase (227 aa).

Substrate is bound by residues 7–14, 20–21, arginine 59, 86–89, lysine 97, 113–114, and 182–183; these read RHGQSEWN, TG, ERHY, RR, and GN. Histidine 8 acts as the Tele-phosphohistidine intermediate in catalysis. Glutamate 86 functions as the Proton donor/acceptor in the catalytic mechanism.

This sequence belongs to the phosphoglycerate mutase family. BPG-dependent PGAM subfamily. In terms of assembly, homodimer.

The enzyme catalyses (2R)-2-phosphoglycerate = (2R)-3-phosphoglycerate. The protein operates within carbohydrate degradation; glycolysis; pyruvate from D-glyceraldehyde 3-phosphate: step 3/5. In terms of biological role, catalyzes the interconversion of 2-phosphoglycerate and 3-phosphoglycerate. In Neisseria meningitidis serogroup A / serotype 4A (strain DSM 15465 / Z2491), this protein is 2,3-bisphosphoglycerate-dependent phosphoglycerate mutase.